Consider the following 1240-residue polypeptide: DNA excision repair protein ERCC-6-like (1240 aa).

Phosphoserine is present on Ser-14. Residues 21–54 (YLRYVQEAKEAAKNGDLEESLKLFNLAKDIFPTK) form a TPR 1 repeat. The 169-residue stretch at 110–278 (SLYKDGRKGG…WSLFDFACQG (169 aa)) folds into the Helicase ATP-binding domain. Position 123–130 (123–130 (DDMGLGKT)) interacts with ATP. A DEAH box motif is present at residues 229–232 (DEAH). One can recognise a Helicase C-terminal domain in the interval 467 to 631 (FLMSLLERLQ…FTKQELKELF (165 aa)). The segment at 736-760 (FPSQQKKKGTEFNKPQPQPSRLLTK) is disordered. Polar residues predominate over residues 748-760 (NKPQPQPSRLLTK). A phosphoserine mark is found at Ser-755 and Ser-773. The tract at residues 778–813 (DQSAESEPQEHSEVHDVTSLQGSHHFNSTSDAGTIA) is disordered. Residues 795 to 809 (TSLQGSHHFNSTSDA) show a composition bias toward polar residues. Ser-821 carries the phosphoserine modification. The interval 845 to 879 (QKKGLQASPGQEAPSENLGSFHYLPRESSKASLGP) is disordered. Ser-966, Ser-998, Ser-1001, and Ser-1021 each carry phosphoserine. Residues 974–1085 (KEKSLQSPAA…EVNTSLHSRR (112 aa)) are disordered. Positions 978–998 (LQSPAANSRAKSALTLSLDSS) are enriched in polar residues. Polar residues predominate over residues 1049-1065 (SVKQFDASTPQSGSNPS). Thr-1057 is modified (phosphothreonine). Phosphoserine is present on residues Ser-1092 and Ser-1112. A compositionally biased stretch (acidic residues) spans 1104–1117 (MEERLDNSSEEESE). The segment at 1104-1185 (MEERLDNSSE…MPDPPQDLAV (82 aa)) is disordered. Polar residues predominate over residues 1135 to 1165 (EQPSGATLASGNKSSNLTMSEPTSPAPQSSP). Ser-1172 is modified (phosphoserine). A TPR 2 repeat occupies 1191–1224 (YESLVARGKELKECGKIQEALNCLVKALDIKSAD).

The protein belongs to the SNF2/RAD54 helicase family. As to quaternary structure, interacts with PLK1, which phosphorylates it. Both proteins are mutually dependent on each other for correct subcellular localization. Interacts (via N-terminal TPR repeat) with BEND3 (via BEN domains 1 and 3); the interaction is direct. In terms of processing, phosphorylation by PLK1 prevents the association with chromosome arms and restricts its localization to the kinetochore-centromere region. Expressed mainly in the neural tube and heart of 10.5 dpc embryo. Significantly down-regulated after alcohol exposure in embryonic brain and heart, but not in embryonic kidney, liver, or lung.

It localises to the chromosome. The protein resides in the centromere. The protein localises to the kinetochore. The enzyme catalyses ATP + H2O = ADP + phosphate + H(+). Its function is as follows. DNA helicase that acts as a tension sensor that associates with catenated DNA which is stretched under tension until it is resolved during anaphase. Functions as ATP-dependent DNA translocase. Can promote Holliday junction branch migration (in vitro). The sequence is that of DNA excision repair protein ERCC-6-like (Ercc6l) from Mus musculus (Mouse).